The sequence spans 494 residues: 3-octaprenyl-4-hydroxybenzoate carboxy-lyase (494 aa).

A Mn(2+)-binding site is contributed by Asn172. Prenylated FMN-binding positions include 175-177 (IYR), 189-191 (RWL), and 194-195 (RG). Residue Glu238 participates in Mn(2+) binding. Catalysis depends on Asp287, which acts as the Proton donor.

Belongs to the UbiD family. In terms of assembly, homohexamer. The cofactor is prenylated FMN. Requires Mn(2+) as cofactor.

The protein resides in the cell membrane. It carries out the reaction a 4-hydroxy-3-(all-trans-polyprenyl)benzoate + H(+) = a 2-(all-trans-polyprenyl)phenol + CO2. It functions in the pathway cofactor biosynthesis; ubiquinone biosynthesis. Functionally, catalyzes the decarboxylation of 3-octaprenyl-4-hydroxy benzoate to 2-octaprenylphenol, an intermediate step in ubiquinone biosynthesis. This Citrobacter koseri (strain ATCC BAA-895 / CDC 4225-83 / SGSC4696) protein is 3-octaprenyl-4-hydroxybenzoate carboxy-lyase.